Reading from the N-terminus, the 852-residue chain is Lon protease homolog 2, peroxisomal (852 aa).

Residue S2 is modified to N-acetylserine. Positions 13–222 (LPLLLTHEGV…MTIPLLVRQI (210 aa)) constitute a Lon N-terminal domain. Residue 375-382 (GPPGVGKT) participates in ATP binding. Residues 651 to 837 (LSQPGVAIGL…DEVLNAAFDG (187 aa)) enclose the Lon proteolytic domain. Residues S743 and K786 contribute to the active site. The short motif at 850-852 (SKL) is the Microbody targeting signal element.

It belongs to the peptidase S16 family. In terms of assembly, interacts with PEX5. Interacts with TYSND1. May interact with enzymes involved in beta-oxidation of fatty acids, including ACOX1/AOX.

It is found in the peroxisome matrix. The enzyme catalyses Hydrolysis of proteins in presence of ATP.. Its function is as follows. ATP-dependent serine protease that mediates the selective degradation of misfolded and unassembled polypeptides in the peroxisomal matrix. Necessary for type 2 peroxisome targeting signal (PTS2)-containing protein processing and facilitates peroxisome matrix protein import. May indirectly regulate peroxisomal fatty acid beta-oxidation through degradation of the self-processed forms of TYSND1. The chain is Lon protease homolog 2, peroxisomal from Bos taurus (Bovine).